Here is a 291-residue protein sequence, read N- to C-terminus: Small ribosomal subunit protein uS2 (291 aa).

A disordered region spans residues serine 256–tryptophan 291.

Belongs to the universal ribosomal protein uS2 family. Component of the small ribosomal subunit. Mature ribosomes consist of a small (40S) and a large (60S) subunit. The 40S subunit contains about 33 different proteins and 1 molecule of RNA (18S). The 60S subunit contains about 49 different proteins and 3 molecules of RNA (25S, 5.8S and 5S). Interacts with RPS21.

It localises to the cytoplasm. Required for the assembly and/or stability of the 40S ribosomal subunit. Required for the processing of the 20S rRNA-precursor to mature 18S rRNA in a late step of the maturation of 40S ribosomal subunits. This Coccidioides immitis (strain RS) (Valley fever fungus) protein is Small ribosomal subunit protein uS2.